The sequence spans 241 residues: Class B acid phosphatase (241 aa).

Residues 1–27 (MFITTKKSLIALVLATAGLISSPVSFA) form the signal peptide. Catalysis depends on aspartate 72, which acts as the Nucleophile. Mg(2+)-binding residues include aspartate 72 and aspartate 74. Aspartate 74 serves as the catalytic Proton donor. Residues 141–142 (TG) and lysine 181 each bind substrate. Aspartate 196 serves as a coordination point for Mg(2+).

Belongs to the class B bacterial acid phosphatase family. In terms of assembly, homotetramer. Mg(2+) is required as a cofactor.

It is found in the periplasm. It carries out the reaction a phosphate monoester + H2O = an alcohol + phosphate. Its function is as follows. Dephosphorylates several organic phosphate monoesters. Also has a phosphotransferase activity catalyzing the transfer of low-energy phosphate groups from organic phosphate monoesters to free hydroxyl groups of various organic compounds. The protein is Class B acid phosphatase of Edwardsiella ictaluri (strain 93-146).